The primary structure comprises 341 residues: MEQPQYNSYKVRKLDDPEEKKLAILKATQSIEKKFGSNTILNEEGKASQHVQALPSGILSLDCAIGIGGYPKGRLIELFGAESSGKTTVALQAVAETQKNGGYVAYIDAENSLDIEYAENLGVKSDSLIFAQPDTGEEAFYMINEFVRTGAFDLIVVDSVAALTPASEIDGVKMPGQQAKMMSEQLSQLVGKVNQTKTVIIFINQIRSTMSGLFLNKETTPGGSALKFYSSVRIEVKSGEKIKDGIDTIGKKTTLHTVKNKVSSPYKKPTVINIFGDGFSQEIDVVTTALQLGVVKKLGEWYSFNGQKLGRGIFGVKEYLSHHPSVFNALDNLTREALQFS.

Gly80–Thr87 lines the ATP pocket.

This sequence belongs to the RecA family.

Its subcellular location is the cytoplasm. Its function is as follows. Can catalyze the hydrolysis of ATP in the presence of single-stranded DNA, the ATP-dependent uptake of single-stranded DNA by duplex DNA, and the ATP-dependent hybridization of homologous single-stranded DNAs. It interacts with LexA causing its activation and leading to its autocatalytic cleavage. This chain is Protein RecA, plasmid, found in Lactococcus lactis subsp. lactis (Streptococcus lactis).